Consider the following 631-residue polypeptide: MRRPKKYEAGEATQYISRRAAIRKLQLSLNDFRRLCILKGVYPREPKHRRRAQKGSSEIKILYHTKDIRFLLHESIVWTLRDYKIFAKKTSRDRAIKDFRNLKRRLALFPEIKLDHIVKERYPTFIDALKDLDDCLTLLFLFSTFPSLHLIPREQSNLCRRLTIEFLHYVIASKSLRKVFISIKGYYFQAEIKGQKVTWIMPHYYPFKPQSRQEVDFKVMSIFVEFYTILQGFTNFRLFHGLNLAYPPQFPSSLLQDNEDTFKDEASFVSDRIAALNFELLRTDKVQEDEEEPDIDMELLEQDGDSKRIIKMKQEAQEVSRLRTLFKGLKFFINREVPREPLVILIRSFGGKVSWDASVFPGATFAENDETITHQIVDRPSLSTQYISRDYIQPQWLFDCVNQRQLLPTNDYFLGETLPPHLSPFVDSKRDSYIPPEEKALHDPSLIETHEQSEEESEEDEAEKEEEEADQELLDAQLQLAYQQETAEYKKYGGPDGVNEDEEDLSEEDDEEDDDEEDVDKEDVDEQTKRKQQEKEKMSVQSGKVHKVNKRQVHKAEVDEHRLQARMVKPRHRNLFRKLIREKQTKEKEEWLLRKKRRNIDADNKEAKKAAKREARKQAAEAAARAAKLVK.

Positions arginine 321 to leucine 414 constitute a BRCT domain. Positions serine 428–histidine 442 are enriched in basic and acidic residues. Disordered stretches follow at residues serine 428–glutamine 471, tyrosine 489–histidine 561, and alanine 602–lysine 631. Phosphoserine occurs at positions 453 and 457. 2 stretches are compositionally biased toward acidic residues: residues serine 453–glutamine 471 and valine 498–aspartate 525. The segment covering glutamate 526–methionine 538 has biased composition (basic and acidic residues). A compositionally biased stretch (basic residues) spans lysine 544–valine 553. A coiled-coil region spans residues tryptophan 591–lysine 631. Positions alanine 602–alanine 619 are enriched in basic and acidic residues. A compositionally biased stretch (low complexity) spans alanine 620–lysine 631.

Belongs to the pescadillo family.

It localises to the nucleus. Its subcellular location is the nucleolus. The protein resides in the nucleoplasm. Functionally, required for maturation of ribosomal RNAs and formation of the large ribosomal subunit. This chain is Pescadillo homolog, found in Drosophila pseudoobscura pseudoobscura (Fruit fly).